The chain runs to 631 residues: Mitochondrial Rho GTPase 1 (631 aa).

The Cytoplasmic portion of the chain corresponds to 1–605 (MPAGRGRPLR…TQADLKSSTF (605 aa)). In terms of domain architecture, Miro 1 spans 15–181 (KKDVRILLVG…FYYAQKAVLH (167 aa)). Positions 27, 29, 30, 31, and 32 each coordinate GTP. T31 contributes to the Mg(2+) binding site. 2 residues coordinate Mg(2+): P48 and D70. Residue S72 participates in GTP binding. At K105 the chain carries N6-acetyllysine. Residues N131, K132, D134, A162, and K163 each contribute to the GTP site. K166 participates in a covalent cross-link: Glycyl lysine isopeptide (Lys-Gly) (interchain with G-Cter in ubiquitin). The region spanning 197–232 (ACIKALTRIFKISDQDNDGTLNDAELNFFQRICFNT) is the EF-hand 1 domain. Ca(2+) contacts are provided by D210, D212, D214, T216, and E221. K248 is covalently cross-linked (Glycyl lysine isopeptide (Lys-Gly) (interchain with G-Cter in ubiquitin)). Positions 317–352 (HAYLFLQSTFDKHDLDRDCALSPDELKDLFKVFPYI) constitute an EF-hand 2 domain. D330, D332, D334, A336, and E341 together coordinate Ca(2+). The Miro 2 domain occupies 429 to 592 (RNVFRCNVIG…FVKLTTMAMY (164 aa)). GTP contacts are provided by N441, C442, G443, K444, S445, G446, K460, K541, D543, T571, and C572. N441 contacts Mg(2+). Residue K585 forms a Glycyl lysine isopeptide (Lys-Gly) (interchain with G-Cter in ubiquitin) linkage. A helical; Anchor for type IV membrane protein transmembrane segment spans residues 606 to 628 (WLRASFGATVFAVLGFAMYKALL). The Mitochondrial intermembrane segment spans residues 629–631 (KQR).

It belongs to the mitochondrial Rho GTPase family. Homodimer. Interacts with the kinesin-binding proteins TRAK1/OIP106 and TRAK2/GRIF1, forming a link between mitochondria and the trafficking apparatus of the microtubules. Interacts with RAP1GDS1. Interacts with ARMCX1. Found in a complex with KIF5B, OGT, RHOT2 and TRAK1. Post-translationally, ubiquitinated by PRKN during mitophagy, leading to its degradation and enhancement of mitophagy. Deubiquitinated by USP30. In terms of processing, acetylation on Lys-105 decreases sensitivity of mitochondrial transport to elevated Ca(2+) levels, increases mitochondrial transport and promotes axon growth. Deacetylated by HDAC6 which blocks mitochondrial transport and mediates axon growth inhibition.

It localises to the mitochondrion outer membrane. The enzyme catalyses GTP + H2O = GDP + phosphate + H(+). It catalyses the reaction ATP + H2O = ADP + phosphate + H(+). The catalysed reaction is UTP + H2O = UDP + phosphate + H(+). In terms of biological role, atypical mitochondrial nucleoside-triphosphatase (NTPase) involved in mitochondrial trafficking. Probably involved in control of anterograde transport of mitochondria and their subcellular distribution. Promotes mitochondrial fission during high calcium conditions. Can hydrolyze GTP, ATP and UTP. The chain is Mitochondrial Rho GTPase 1 (RHOT1) from Bos taurus (Bovine).